Here is a 947-residue protein sequence, read N- to C-terminus: DNA mismatch repair protein MutS (947 aa).

620–627 contacts ATP; sequence GPNMSGKS.

This sequence belongs to the DNA mismatch repair MutS family.

Its function is as follows. This protein is involved in the repair of mismatches in DNA. It is possible that it carries out the mismatch recognition step. This protein has a weak ATPase activity. The sequence is that of DNA mismatch repair protein MutS from Clostridioides difficile (strain 630) (Peptoclostridium difficile).